Reading from the N-terminus, the 796-residue chain is MVVLRPKITLTSVRGRIQVTAEDGERVGPWGGTECFLSRQTGQGPCLVVRSSRHKRHQGTFFRLEGVRQVLSLYAMEGKLTVVVPHQKRLCSVFIETFADVDALQMMAATLQDRSRWKDIEKNVACRVQRITRTNVVDTKRITNMDGGTDTHLDYKQFEWGGGEDDSCAVGGVSCNPLEGARGERNGDGVESILQERPTGLPSAHSGGKLPKHMGGDELNPQLEGSTTPGRMQWTTDQIVATRLVCTGSNVFITGSAGTGKTEWLLHLVRNVLPRDDRTVVTASTGMSARLLGGCTIHSFAGIGRGEGGFNRVYNRVKSKPEVVRAWRQCQTLIIDEIGNISPDTFSMIDEIARSLRGAPEKPFGGIQVILLGDFLQLPPVDSPKARNEWTNGNDTDTDSNPIPGKLKWCFETATWESLKLALVGFRKSYRQMNDPDFALCLEDIRFGRYTRRVERILNECSTRQIKERHGIEPTLIVARRDEATEYNAERLKMLEDVHFHRYESEDYAAIPGMNLEKEVSLQQLLELRIGAQVVLLASLPDAPHLSNGDQGVVVSFAEQTRGPALPVVCFATSGGEEVLVPRVSMEVLGPEGRVIATRTQIPLQLSWAITVHRAQGMTLPLVSVRLNKCFFDCGQAYVALSRVRSREDLMLTAFDPSAIFADARAVAFYEKNFPAQRQSVEDTECELVPIKGKTRAKHPRSQGEKNSVDEGGNAPEEHPLRTDAAFTAYHDLDSQVSTDMPLVPQPPRKKRMLVEELPQVTSSAIPNFTQESNNGDANSQLQHPFSQNNLMVDDD.

Positions 197 to 230 (RPTGLPSAHSGGKLPKHMGGDELNPQLEGSTTPG) are disordered. 255 to 262 (GSAGTGKT) is an ATP binding site. The DNA-binding element occupies 636 to 655 (QAYVALSRVRSREDLMLTAF). Disordered stretches follow at residues 692 to 719 (KGKT…PEEH) and 762 to 796 (TSSA…VDDD).

This sequence belongs to the helicase family. PIF1 subfamily. As to quaternary structure, monomer. It depends on Mg(2+) as a cofactor.

It localises to the nucleus. It catalyses the reaction Couples ATP hydrolysis with the unwinding of duplex DNA at the replication fork by translocating in the 5'-3' direction. This creates two antiparallel DNA single strands (ssDNA). The leading ssDNA polymer is the template for DNA polymerase III holoenzyme which synthesizes a continuous strand.. The enzyme catalyses ATP + H2O = ADP + phosphate + H(+). DNA-dependent ATPase and 5'-3' DNA helicase required for the maintenance of genome stability. This Trypanosoma brucei brucei (strain 927/4 GUTat10.1) protein is ATP-dependent DNA helicase PIF6.